The primary structure comprises 136 residues: Large ribosomal subunit protein uL16 (136 aa).

The protein belongs to the universal ribosomal protein uL16 family. Part of the 50S ribosomal subunit.

Functionally, binds 23S rRNA and is also seen to make contacts with the A and possibly P site tRNAs. The sequence is that of Large ribosomal subunit protein uL16 from Ehrlichia chaffeensis (strain ATCC CRL-10679 / Arkansas).